Consider the following 681-residue polypeptide: Oligopeptidase A (681 aa).

H470 lines the Zn(2+) pocket. E471 is a catalytic residue. 2 residues coordinate Zn(2+): H474 and H477.

Belongs to the peptidase M3 family. Requires Zn(2+) as cofactor.

The catalysed reaction is Hydrolysis of oligopeptides, with broad specificity. Gly or Ala commonly occur as P1 or P1' residues, but more distant residues are also important, as is shown by the fact that Z-Gly-Pro-Gly-|-Gly-Pro-Ala is cleaved, but not Z-(Gly)(5).. In terms of biological role, may play a specific role in the degradation of signal peptides after they are released from precursor forms of secreted proteins. Can cleave N-acetyl-L-Ala(4). This is Oligopeptidase A (prlC) from Haemophilus influenzae (strain ATCC 51907 / DSM 11121 / KW20 / Rd).